Here is a 208-residue protein sequence, read N- to C-terminus: Glycerol-3-phosphate acyltransferase 1 (208 aa).

5 consecutive transmembrane segments (helical) span residues 52–72 (VVLMDLAKGALAVSVAYYLLI), 77–97 (WVILTGFAAVIGHNWPIWLDF), 112–132 (FLLPVYGLPQHLLILALLVFI), 140–160 (IALATGIALFSLPFLVWYGSH), and 161–181 (SEFATLISVLLFLMIGIKFVL).

Belongs to the PlsY family. In terms of assembly, probably interacts with PlsX.

It is found in the cell membrane. The catalysed reaction is an acyl phosphate + sn-glycerol 3-phosphate = a 1-acyl-sn-glycero-3-phosphate + phosphate. It participates in lipid metabolism; phospholipid metabolism. Functionally, catalyzes the transfer of an acyl group from acyl-phosphate (acyl-PO(4)) to glycerol-3-phosphate (G3P) to form lysophosphatidic acid (LPA). This enzyme utilizes acyl-phosphate as fatty acyl donor, but not acyl-CoA or acyl-ACP. The protein is Glycerol-3-phosphate acyltransferase 1 of Dehalococcoides mccartyi (strain ATCC BAA-2266 / KCTC 15142 / 195) (Dehalococcoides ethenogenes (strain 195)).